Here is a 408-residue protein sequence, read N- to C-terminus: MKQESSFLAKLANGSLVLQILVGIIAGVALASFSHEWAKQVAFLGSLFVGALKAIAPILVFILVASSIANQKKNTQTNMRPIVVLYLLGTFAAALTAVILSMMFPTTLVLAAGVEGTSPPQGISEVISTLLFKLVDNPVNALMTGNYIGILAWGVGLGLALHHSSDSTKQVFADVSHGISQMVHFIIRLAPIGIFGLVAATFAETGFAAIAGYAQLLAVLLGAMAFIALIINPLIVYVKIKRNPYPLVIRCLRESGMTAFFTRSSAANIPVNMALCEKLKLHEDTYAVSIPLGATINMGGAAITITVLTLAAAHTLGIQVDLLTALLLSVVAAISACGASGVAGGSLLLIPLACSLFGISNDVAMQVVAVGFIIGVIQDAAETALNSSTDVIFTAAACEAAENKAKLG.

The next 9 membrane-spanning stretches (helical) occupy residues 11-31 (LANGSLVLQILVGIIAGVALA), 43-63 (FLGSLFVGALKAIAPILVFIL), 82-102 (IVVLYLLGTFAAALTAVILSM), 141-161 (ALMTGNYIGILAWGVGLGLAL), 192-212 (IGIFGLVAATFAETGFAAIAG), 216-236 (LLAVLLGAMAFIALIINPLIV), 290-310 (IPLGATINMGGAAITITVLTL), 316-336 (LGIQVDLLTALLLSVVAAISA), and 363-383 (VAMQVVAVGFIIGVIQDAAET).

Belongs to the dicarboxylate/amino acid:cation symporter (DAACS) (TC 2.A.23) family.

The protein resides in the cell inner membrane. It carries out the reaction L-serine(in) + Na(+)(in) = L-serine(out) + Na(+)(out). The catalysed reaction is L-threonine(in) + Na(+)(in) = L-threonine(out) + Na(+)(out). Functionally, involved in the import of serine and threonine into the cell, with the concomitant import of sodium (symport system). The sequence is that of Serine/threonine transporter SstT from Shewanella oneidensis (strain ATCC 700550 / JCM 31522 / CIP 106686 / LMG 19005 / NCIMB 14063 / MR-1).